We begin with the raw amino-acid sequence, 333 residues long: Transcription initiation factor IIB (333 aa).

The TFIIB-type zinc finger occupies 33 to 64; the sequence is EVYRCPICGNDRFVYNYERGEIVCIVCGAVVQ. 4 residues coordinate Zn(2+): C37, C40, C56, and C59. Repeat copies occupy residues 149-232 and 243-324.

The protein belongs to the TFIIB family.

Its function is as follows. Stabilizes TBP binding to an archaeal box-A promoter. Also responsible for recruiting RNA polymerase II to the pre-initiation complex (DNA-TBP-TFIIB). This Pyrobaculum islandicum (strain DSM 4184 / JCM 9189 / GEO3) protein is Transcription initiation factor IIB.